Here is a 136-residue protein sequence, read N- to C-terminus: Small ribosomal subunit protein bS16 (136 aa).

Positions 114–123 (TLKARRRRAK) are enriched in basic residues. The disordered stretch occupies residues 114 to 136 (TLKARRRRAKKEAEAASASSAEG).

It belongs to the bacterial ribosomal protein bS16 family.

The polypeptide is Small ribosomal subunit protein bS16 (Chlorobium chlorochromatii (strain CaD3)).